We begin with the raw amino-acid sequence, 365 residues long: Caffeic acid 3-O-methyltransferase (365 aa).

Asn131 contacts (E)-ferulate. Gly208, Asp231, Asp251, Met252, Met264, and Lys265 together coordinate S-adenosyl-L-homocysteine. His269 (proton acceptor) is an active-site residue. Asp270 contacts (E)-5-hydroxyferulate. Residues Glu297 and Glu329 contribute to the active site.

Belongs to the class I-like SAM-binding methyltransferase superfamily. Cation-independent O-methyltransferase family. COMT subfamily. In terms of assembly, homodimer. In terms of tissue distribution, more abundant in roots and stems.

The catalysed reaction is (E)-caffeate + S-adenosyl-L-methionine = (E)-ferulate + S-adenosyl-L-homocysteine + H(+). The enzyme catalyses (E)-5-hydroxyferulate + S-adenosyl-L-methionine = (E)-sinapate + S-adenosyl-L-homocysteine + H(+). The protein operates within aromatic compound metabolism; phenylpropanoid biosynthesis. Its function is as follows. Catalyzes the conversion of caffeic acid to ferulic acid and of 5-hydroxyferulic acid to sinapic acid. The resulting products may subsequently be converted to the corresponding alcohols that are incorporated into lignins. The chain is Caffeic acid 3-O-methyltransferase from Medicago sativa (Alfalfa).